The chain runs to 75 residues: Tautomerase PptA (75 aa).

Proline 2 functions as the Proton acceptor; via imino nitrogen in the catalytic mechanism.

Belongs to the 4-oxalocrotonate tautomerase family. PptA subfamily. Homodimer.

It is found in the cytoplasm. In Klebsiella pneumoniae subsp. pneumoniae (strain ATCC 700721 / MGH 78578), this protein is Tautomerase PptA.